Here is a 197-residue protein sequence, read N- to C-terminus: FMN-dependent NADH:quinone oxidoreductase (197 aa).

FMN-binding positions include Ser10 and 16–18 (SIS).

The protein belongs to the azoreductase type 1 family. As to quaternary structure, homodimer. FMN is required as a cofactor.

It carries out the reaction 2 a quinone + NADH + H(+) = 2 a 1,4-benzosemiquinone + NAD(+). It catalyses the reaction N,N-dimethyl-1,4-phenylenediamine + anthranilate + 2 NAD(+) = 2-(4-dimethylaminophenyl)diazenylbenzoate + 2 NADH + 2 H(+). Functionally, quinone reductase that provides resistance to thiol-specific stress caused by electrophilic quinones. Its function is as follows. Also exhibits azoreductase activity. Catalyzes the reductive cleavage of the azo bond in aromatic azo compounds to the corresponding amines. This is FMN-dependent NADH:quinone oxidoreductase from Erythrobacter litoralis (strain HTCC2594).